A 104-amino-acid polypeptide reads, in one-letter code: Photosystem II reaction center Psb28 protein (104 aa).

Belongs to the Psb28 family. As to quaternary structure, part of the photosystem II complex.

It localises to the cellular thylakoid membrane. The chain is Photosystem II reaction center Psb28 protein from Synechococcus sp. (strain JA-3-3Ab) (Cyanobacteria bacterium Yellowstone A-Prime).